A 555-amino-acid polypeptide reads, in one-letter code: Potassium-transporting ATPase potassium-binding subunit (555 aa).

A run of 10 helical transmembrane segments spans residues 2 to 22 (IWVA…PTGI), 60 to 80 (QYAL…YFIF), 130 to 150 (IGIT…VMAF), 173 to 193 (VFLP…VPQT), 246 to 266 (MSNI…PFTY), 278 to 298 (ILFV…TTSE), 374 to 394 (AGFV…GLMV), 412 to 432 (LIAV…ALAL), 483 to 503 (LVMF…AASL), and 525 to 545 (GIFI…MLVL).

This sequence belongs to the KdpA family. As to quaternary structure, the system is composed of three essential subunits: KdpA, KdpB and KdpC.

Its subcellular location is the cell membrane. Part of the high-affinity ATP-driven potassium transport (or Kdp) system, which catalyzes the hydrolysis of ATP coupled with the electrogenic transport of potassium into the cytoplasm. This subunit binds the extracellular potassium ions and delivers the ions to the membrane domain of KdpB through an intramembrane tunnel. The chain is Potassium-transporting ATPase potassium-binding subunit from Bacillus anthracis (strain A0248).